Here is a 317-residue protein sequence, read N- to C-terminus: Ornithine carbamoyltransferase (317 aa).

Carbamoyl phosphate is bound by residues 57 to 60 (STRT), Gln-84, Arg-108, and 135 to 138 (HPCQ). L-ornithine is bound by residues Asn-166, Asp-230, and 234–235 (SM). Carbamoyl phosphate-binding positions include 270–271 (CL) and Arg-298.

The protein belongs to the aspartate/ornithine carbamoyltransferase superfamily. OTCase family. In terms of assembly, homododecamer.

The protein localises to the cytoplasm. It catalyses the reaction carbamoyl phosphate + L-ornithine = L-citrulline + phosphate + H(+). Its pathway is amino-acid biosynthesis; L-arginine biosynthesis; L-arginine from L-ornithine and carbamoyl phosphate: step 1/3. Functionally, reversibly catalyzes the transfer of the carbamoyl group from carbamoyl phosphate (CP) to the N(epsilon) atom of ornithine (ORN) to produce L-citrulline. This chain is Ornithine carbamoyltransferase, found in Pyrococcus abyssi (strain GE5 / Orsay).